Reading from the N-terminus, the 528-residue chain is T-complex protein 1 subunit gamma (528 aa).

A Phosphoserine modification is found at S250. Cysteines 364 and 370 form a disulfide.

This sequence belongs to the TCP-1 chaperonin family. In terms of assembly, heterooligomeric complex of about 850 to 900 kDa that forms two stacked rings, 12 to 16 nm in diameter.

It localises to the cytoplasm. Its function is as follows. Molecular chaperone; assists the folding of proteins upon ATP hydrolysis. Known to play a role, in vitro, in the folding of actin and tubulin. The chain is T-complex protein 1 subunit gamma (cct3) from Schizosaccharomyces pombe (strain 972 / ATCC 24843) (Fission yeast).